The primary structure comprises 188 residues: Guanylate kinase (188 aa).

Residues 2–183 (TKLIIISAPS…CVEQIRKAIA (182 aa)) form the Guanylate kinase-like domain. An ATP-binding site is contributed by 9 to 16 (APSGTGKS).

It belongs to the guanylate kinase family.

It is found in the cytoplasm. The catalysed reaction is GMP + ATP = GDP + ADP. In terms of biological role, essential for recycling GMP and indirectly, cGMP. The chain is Guanylate kinase from Porphyromonas gingivalis (strain ATCC BAA-308 / W83).